Here is a 102-residue protein sequence, read N- to C-terminus: NADH-quinone oxidoreductase subunit K (102 aa).

3 helical membrane passes run 6 to 26, 30 to 50, and 62 to 82; these read LEHG…GLMV, ILFV…AFVV, and VMFI…LAIL.

Belongs to the complex I subunit 4L family. In terms of assembly, NDH-1 is composed of 13 different subunits. Subunits NuoA, H, J, K, L, M, N constitute the membrane sector of the complex.

Its subcellular location is the cell inner membrane. The enzyme catalyses a quinone + NADH + 5 H(+)(in) = a quinol + NAD(+) + 4 H(+)(out). Its function is as follows. NDH-1 shuttles electrons from NADH, via FMN and iron-sulfur (Fe-S) centers, to quinones in the respiratory chain. The immediate electron acceptor for the enzyme in this species is believed to be ubiquinone. Couples the redox reaction to proton translocation (for every two electrons transferred, four hydrogen ions are translocated across the cytoplasmic membrane), and thus conserves the redox energy in a proton gradient. This is NADH-quinone oxidoreductase subunit K from Pseudomonas syringae pv. syringae (strain B728a).